The sequence spans 469 residues: MQQADTLAAQFDVAVIGSGPGGYEAAIHAARYGLKTCIVEKAVLGGVCVNWGCIPTKALLRSAEVFDLAKNPETFGVNVGNVSFDLAQAVKRSRNVALKSSKGVAYLLKKAAVEVLAGEAVLTGGAGVMVTMPDGSVRMLGAKNIIVATGSTPRVIPGLEPDGKKIITSREALILKEVPKSMIVVGGGAIGVEMAWFYAKAGSKVTIVELMPRMLPAEEAEVSEALKRSFEKAGITVHCGAKLDNVAVSESGVSAELVVEGSAPQTLNASCLLVAVGVTGAIDGLGLDAVGVETERGFIRTDGQCRTSAPGIYAIGDVRGGMLLAHKASAEAAIAVEAIAGKSPEPLSEPLIPRCVYAQPSVASVGLTEEAAVNAGYQVAVGRSQFAASGKANAYGQLEGFVKLVFDAATGKMLGGHLIGHDAVELIGELGLACRYGVTAGGLVNTVHAHPTLSETVREAAFDALQSMG.

FAD contacts are provided by residues 40-48 (EKAVLGGVC), K57, and A120. Residues C48 and C53 are joined by a disulfide bond. NAD(+) contacts are provided by residues 186-190 (GGGAI), E209, and 275-278 (AVGV). FAD is bound by residues D317 and A325. The active-site Proton acceptor is the H450.

Belongs to the class-I pyridine nucleotide-disulfide oxidoreductase family. In terms of assembly, homodimer. The cofactor is FAD.

It is found in the cytoplasm. It carries out the reaction N(6)-[(R)-dihydrolipoyl]-L-lysyl-[protein] + NAD(+) = N(6)-[(R)-lipoyl]-L-lysyl-[protein] + NADH + H(+). In terms of biological role, lipoamide dehydrogenase is a component of the alpha-ketoacid dehydrogenase complexes. The sequence is that of Dihydrolipoyl dehydrogenase (lpd) from Chlorobaculum tepidum (strain ATCC 49652 / DSM 12025 / NBRC 103806 / TLS) (Chlorobium tepidum).